A 298-amino-acid polypeptide reads, in one-letter code: Cyclin-dependent kinase 1 (298 aa).

Ser2 carries the post-translational modification N-acetylserine. One can recognise a Protein kinase domain in the interval 8 to 295; the sequence is YKRLEKVGEG…ARRAAIHPYF (288 aa). Residues 14-22 and Lys40 contribute to the ATP site; that span reads VGEGTYGVV. Tyr19 is modified (phosphotyrosine). Asp136 acts as the Proton acceptor in catalysis. The residue at position 169 (Thr169) is a Phosphothreonine.

Belongs to the protein kinase superfamily. CMGC Ser/Thr protein kinase family. CDC2/CDKX subfamily. As to quaternary structure, forms a stable but non-covalent complex with the CKS1 protein and with a cyclin.

It catalyses the reaction L-seryl-[protein] + ATP = O-phospho-L-seryl-[protein] + ADP + H(+). The catalysed reaction is L-threonyl-[protein] + ATP = O-phospho-L-threonyl-[protein] + ADP + H(+). Its activity is regulated as follows. Phosphorylation at Thr-18 or Tyr-19 inactivates the enzyme, while phosphorylation at Thr-169 activates it. Functionally, cyclin-dependent kinase that acts as a master regulator of the mitotic and meiotic cell cycles. Required to drive the G1-S transition. More than 200 substrates have been identified. Substrate specificity is in part regulated by the bound cyclin protein. Phosphorylates YTA7 during S-phase to promote transcription of histones. May phosphorylate CNN1, to contribute to the enrichment of CNN1 on anaphase kinetochores. The protein is Cyclin-dependent kinase 1 of Saccharomyces cerevisiae (strain ATCC 204508 / S288c) (Baker's yeast).